The primary structure comprises 145 residues: UPF0763 protein CFF8240_1572 (145 aa).

Belongs to the UPF0763 family.

The sequence is that of UPF0763 protein CFF8240_1572 from Campylobacter fetus subsp. fetus (strain 82-40).